We begin with the raw amino-acid sequence, 1267 residues long: RNA-directed RNA polymerase lambda-3 (1267 aa).

The 238-residue stretch at 555–792 folds into the RdRp catalytic domain; it reads LSPTSGSAVI…KLYFIFGCRI (238 aa).

Belongs to the reoviridae RNA-directed RNA polymerase family.

Its subcellular location is the virion. The catalysed reaction is RNA(n) + a ribonucleoside 5'-triphosphate = RNA(n+1) + diphosphate. Functionally, RNA-directed RNA polymerase that is involved in transcription and genome replication. Following infection, it catalyzes the synthesis of fully conservative plus strands. After core assembly, which consists in recruitment of one capped plus-strand for each genomic segments and polymerase complexes, the polymerase switches mode and catalyzes the synthesis of complementary minus-strands. This Reovirus type 3 (strain Dearing) (T3D) protein is RNA-directed RNA polymerase lambda-3 (L1).